A 64-amino-acid chain; its full sequence is Large ribosomal subunit protein uL29 (64 aa).

It belongs to the universal ribosomal protein uL29 family.

The polypeptide is Large ribosomal subunit protein uL29 (Nitrosomonas europaea (strain ATCC 19718 / CIP 103999 / KCTC 2705 / NBRC 14298)).